The following is a 204-amino-acid chain: Outer-membrane lipoprotein carrier protein (204 aa).

The N-terminal stretch at 1 to 21 is a signal peptide; that stretch reads MKKYLNLTALLLVGISNVTWA.

It belongs to the LolA family. Monomer.

The protein localises to the periplasm. In terms of biological role, participates in the translocation of lipoproteins from the inner membrane to the outer membrane. Only forms a complex with a lipoprotein if the residue after the N-terminal Cys is not an aspartate (The Asp acts as a targeting signal to indicate that the lipoprotein should stay in the inner membrane). The chain is Outer-membrane lipoprotein carrier protein from Histophilus somni (strain 129Pt) (Haemophilus somnus).